A 288-amino-acid chain; its full sequence is Pyridoxal kinase PdxY (288 aa).

Substrate is bound by residues serine 12 and 47–48; that span reads TQ. Residues aspartate 114, glutamate 151, lysine 184, and 211–214 contribute to the ATP site; that span reads RPLL. Position 225 (aspartate 225) interacts with substrate.

This sequence belongs to the pyridoxine kinase family. PdxY subfamily. In terms of assembly, homodimer. Mg(2+) serves as cofactor.

It catalyses the reaction pyridoxal + ATP = pyridoxal 5'-phosphate + ADP + H(+). It functions in the pathway cofactor metabolism; pyridoxal 5'-phosphate salvage; pyridoxal 5'-phosphate from pyridoxal: step 1/1. In terms of biological role, pyridoxal kinase involved in the salvage pathway of pyridoxal 5'-phosphate (PLP). Catalyzes the phosphorylation of pyridoxal to PLP. The chain is Pyridoxal kinase PdxY from Pseudomonas syringae pv. tomato (strain ATCC BAA-871 / DC3000).